Consider the following 264-residue polypeptide: Thymidylate synthase (264 aa).

Residue Arg-21 coordinates dUMP. Residue His-51 participates in (6R)-5,10-methylene-5,6,7,8-tetrahydrofolate binding. 126–127 (RR) serves as a coordination point for dUMP. Cys-146 (nucleophile) is an active-site residue. DUMP contacts are provided by residues 166–169 (RSAD), Asn-177, and 207–209 (HIY). Asp-169 lines the (6R)-5,10-methylene-5,6,7,8-tetrahydrofolate pocket. Ser-263 contacts (6R)-5,10-methylene-5,6,7,8-tetrahydrofolate.

The protein belongs to the thymidylate synthase family. Bacterial-type ThyA subfamily. In terms of assembly, homodimer.

The protein localises to the cytoplasm. It catalyses the reaction dUMP + (6R)-5,10-methylene-5,6,7,8-tetrahydrofolate = 7,8-dihydrofolate + dTMP. It participates in pyrimidine metabolism; dTTP biosynthesis. Functionally, catalyzes the reductive methylation of 2'-deoxyuridine-5'-monophosphate (dUMP) to 2'-deoxythymidine-5'-monophosphate (dTMP) while utilizing 5,10-methylenetetrahydrofolate (mTHF) as the methyl donor and reductant in the reaction, yielding dihydrofolate (DHF) as a by-product. This enzymatic reaction provides an intracellular de novo source of dTMP, an essential precursor for DNA biosynthesis. This chain is Thymidylate synthase, found in Halalkalibacterium halodurans (strain ATCC BAA-125 / DSM 18197 / FERM 7344 / JCM 9153 / C-125) (Bacillus halodurans).